Reading from the N-terminus, the 168-residue chain is Photosystem I assembly protein Ycf3 (168 aa).

TPR repeat units lie at residues 35 to 68, 72 to 105, and 120 to 153; these read AFTYYRDGMSAQSEGNYAEALQNYYEAMRLEIDP, SYILYNIGLIHTSNGEHTKALEYYFRALERNPFL, and GEQAIQQGDSEIAEAWFDQAAEYWKQAIALTPGN.

It belongs to the Ycf3 family.

It localises to the plastid. It is found in the chloroplast thylakoid membrane. Functionally, essential for the assembly of the photosystem I (PSI) complex. May act as a chaperone-like factor to guide the assembly of the PSI subunits. This is Photosystem I assembly protein Ycf3 from Solanum lycopersicum (Tomato).